A 217-amino-acid chain; its full sequence is Deoxyribose-phosphate aldolase (217 aa).

D90 (proton donor/acceptor) is an active-site residue. K152 functions as the Schiff-base intermediate with acetaldehyde in the catalytic mechanism. Catalysis depends on K181, which acts as the Proton donor/acceptor.

This sequence belongs to the DeoC/FbaB aldolase family. DeoC type 1 subfamily.

Its subcellular location is the cytoplasm. The catalysed reaction is 2-deoxy-D-ribose 5-phosphate = D-glyceraldehyde 3-phosphate + acetaldehyde. It participates in carbohydrate degradation; 2-deoxy-D-ribose 1-phosphate degradation; D-glyceraldehyde 3-phosphate and acetaldehyde from 2-deoxy-alpha-D-ribose 1-phosphate: step 2/2. Catalyzes a reversible aldol reaction between acetaldehyde and D-glyceraldehyde 3-phosphate to generate 2-deoxy-D-ribose 5-phosphate. In Metamycoplasma hominis (Mycoplasma hominis), this protein is Deoxyribose-phosphate aldolase.